A 101-amino-acid chain; its full sequence is uncharacterized protein (101 aa).

Transmembrane regions (helical) follow at residues 10 to 30 and 67 to 87; these read VLAILVCQFIGPNVFIIIGSI and IILGFIGIYVFLFVLLFILSI.

The protein resides in the membrane. This is an uncharacterized protein from Acanthamoeba polyphaga (Amoeba).